The primary structure comprises 92 residues: Small ribosomal subunit protein uS19 (92 aa).

This sequence belongs to the universal ribosomal protein uS19 family.

Functionally, protein S19 forms a complex with S13 that binds strongly to the 16S ribosomal RNA. In Rhodopseudomonas palustris (strain BisB5), this protein is Small ribosomal subunit protein uS19.